We begin with the raw amino-acid sequence, 56 residues long: Frontoxin I (56 aa).

Cystine bridges form between cysteine 3-cysteine 22, cysteine 17-cysteine 39, cysteine 41-cysteine 52, and cysteine 53-cysteine 56.

The protein belongs to the three-finger toxin family. Short-chain subfamily. Type I alpha-neurotoxin sub-subfamily. Expressed by the venom gland.

Its subcellular location is the secreted. Functionally, binds to muscle nicotinic acetylcholine receptor (nAChR) and inhibit acetylcholine from binding to the receptor, thereby impairing neuromuscular transmission. The sequence is that of Frontoxin I from Micrurus frontalis (Coral snake).